We begin with the raw amino-acid sequence, 292 residues long: 4-diphosphocytidyl-2-C-methyl-D-erythritol kinase (292 aa).

Lys10 is a catalytic residue. 94 to 104 (PVAAGLAGGSS) is a binding site for ATP. Asp136 is a catalytic residue.

Belongs to the GHMP kinase family. IspE subfamily.

It catalyses the reaction 4-CDP-2-C-methyl-D-erythritol + ATP = 4-CDP-2-C-methyl-D-erythritol 2-phosphate + ADP + H(+). The protein operates within isoprenoid biosynthesis; isopentenyl diphosphate biosynthesis via DXP pathway; isopentenyl diphosphate from 1-deoxy-D-xylulose 5-phosphate: step 3/6. Its function is as follows. Catalyzes the phosphorylation of the position 2 hydroxy group of 4-diphosphocytidyl-2C-methyl-D-erythritol. This chain is 4-diphosphocytidyl-2-C-methyl-D-erythritol kinase, found in Brevibacillus brevis (strain 47 / JCM 6285 / NBRC 100599).